Reading from the N-terminus, the 342-residue chain is Farnesyl pyrophosphate synthase 1 (342 aa).

Isopentenyl diphosphate contacts are provided by K47, R50, and Q86. D93 and D97 together coordinate Mg(2+). Residue R102 coordinates dimethylallyl diphosphate. R103 is a binding site for isopentenyl diphosphate. 5 residues coordinate dimethylallyl diphosphate: K190, T191, Q229, K246, and K255.

It belongs to the FPP/GGPP synthase family. Mg(2+) is required as a cofactor.

Its subcellular location is the cytoplasm. It carries out the reaction isopentenyl diphosphate + dimethylallyl diphosphate = (2E)-geranyl diphosphate + diphosphate. It catalyses the reaction isopentenyl diphosphate + (2E)-geranyl diphosphate = (2E,6E)-farnesyl diphosphate + diphosphate. It participates in isoprenoid biosynthesis; farnesyl diphosphate biosynthesis; farnesyl diphosphate from geranyl diphosphate and isopentenyl diphosphate: step 1/1. Its pathway is isoprenoid biosynthesis; geranyl diphosphate biosynthesis; geranyl diphosphate from dimethylallyl diphosphate and isopentenyl diphosphate: step 1/1. Catalyzes the sequential condensation of isopentenyl pyrophosphate with the allylic pyrophosphates, dimethylallyl pyrophosphate, and then with the resultant geranylpyrophosphate to the ultimate product farnesyl pyrophosphate. In Lupinus albus (White lupine), this protein is Farnesyl pyrophosphate synthase 1 (FPS1).